The primary structure comprises 854 residues: Translation initiation factor IF-2 (854 aa).

2 disordered regions span residues 52 to 79 and 128 to 265; these read RQHG…RDGG and RKQE…HGFQ. Residues 61-75 show a composition bias toward polar residues; that stretch reads SQRITLQRKTTSTLS. 2 stretches are compositionally biased toward basic and acidic residues: residues 128-150 and 211-232; these read RKQE…RQEA and VRHD…DNKR. Positions 247–257 are enriched in basic residues; the sequence is RGKLGRKNKKP. The tr-type G domain maps to 354-523; the sequence is KRAPVVTVMG…LLQAEVLELT (170 aa). The segment at 363 to 370 is G1; the sequence is GHVDHGKT. Residue 363–370 coordinates GTP; that stretch reads GHVDHGKT. The G2 stretch occupies residues 388–392; that stretch reads GITQH. The segment at 409-412 is G3; the sequence is DTPG. 409–413 provides a ligand contact to GTP; the sequence is DTPGH. Residues 463 to 466 are G4; it reads TKID. The G5 stretch occupies residues 499-501; it reads SAK.

It belongs to the TRAFAC class translation factor GTPase superfamily. Classic translation factor GTPase family. IF-2 subfamily.

The protein localises to the cytoplasm. One of the essential components for the initiation of protein synthesis. Protects formylmethionyl-tRNA from spontaneous hydrolysis and promotes its binding to the 30S ribosomal subunits. Also involved in the hydrolysis of GTP during the formation of the 70S ribosomal complex. The chain is Translation initiation factor IF-2 from Marinomonas sp. (strain MWYL1).